The following is a 55-amino-acid chain: Large ribosomal subunit protein bL33 (55 aa).

Belongs to the bacterial ribosomal protein bL33 family.

This chain is Large ribosomal subunit protein bL33, found in Phenylobacterium zucineum (strain HLK1).